The chain runs to 659 residues: Protein kinase byr2 (659 aa).

One can recognise an SAM domain in the interval 4-67 (YTSKEVAEWL…LKQRDYLREF (64 aa)). Residues 180-190 (PKLSSVLPTST) are compositionally biased toward low complexity. Disordered regions lie at residues 180–209 (PKLS…YQRP) and 354–387 (SFSP…EEDT). The segment covering 354–365 (SFSPGSSPSFIE) has biased composition (polar residues). A compositionally biased stretch (low complexity) spans 367 to 380 (PSPISPTSTTSEDT). The region spanning 394-658 (WIRGALIGSG…ASELLSHPFV (265 aa)) is the Protein kinase domain. ATP is bound by residues 400–408 (IGSGSFGQV) and Lys-423. Asp-522 acts as the Proton acceptor in catalysis.

The protein belongs to the protein kinase superfamily. STE Ser/Thr protein kinase family. MAP kinase kinase kinase subfamily. In terms of assembly, interacts with rad24 and rad25; these prevent its translocation to the cell membrane during nitrogen starvation.

The protein resides in the cytoplasm. Its subcellular location is the cell membrane. The catalysed reaction is L-seryl-[protein] + ATP = O-phospho-L-seryl-[protein] + ADP + H(+). The enzyme catalyses L-threonyl-[protein] + ATP = O-phospho-L-threonyl-[protein] + ADP + H(+). Serine/threonine protein kinase involved in conjugation and sporulation. It is thought that it phosphorylates the byr1 protein kinase which itself phosphorylate the spk1 kinase. In Schizosaccharomyces pombe (strain 972 / ATCC 24843) (Fission yeast), this protein is Protein kinase byr2.